Reading from the N-terminus, the 224-residue chain is Response regulator protein GraR (224 aa).

Positions 2–115 constitute a Response regulatory domain; that stretch reads QILLVEDDNT…VLIAKLQAIY (114 aa). D51 carries the post-translational modification 4-aspartylphosphate. The segment at residues 126–224 is a DNA-binding region (ompR/PhoB-type); the sequence is KRTLTWQDAV…KVGKGYMAHE (99 aa). Phosphothreonine occurs at positions 128, 130, and 149.

Interacts with GraX. Phosphorylated by GraS. Phosphorylated by Stk1; phosphorylation increases the DNA-binding activity of GraR.

It is found in the cytoplasm. In terms of biological role, member of the two-component regulatory system GraR/GraS involved in resistance against cationic antimicrobial peptides (CAMPs). Upon phosphorylation by GraS, functions as a transcription regulator by direct binding to promoter regions of target genes such as adhesins, exoproteins, transporters, toxins, and proteins involved in cell wall synthesis. Down-regulates the expression of many genes involved in RNA and amino acid synthesis or glycolysis. The polypeptide is Response regulator protein GraR (graR) (Staphylococcus aureus (strain MRSA252)).